Here is a 101-residue protein sequence, read N- to C-terminus: Small ribosomal subunit protein uS14 (101 aa).

It belongs to the universal ribosomal protein uS14 family. As to quaternary structure, part of the 30S ribosomal subunit. Contacts proteins S3 and S10.

In terms of biological role, binds 16S rRNA, required for the assembly of 30S particles and may also be responsible for determining the conformation of the 16S rRNA at the A site. The protein is Small ribosomal subunit protein uS14 of Escherichia coli O139:H28 (strain E24377A / ETEC).